The primary structure comprises 169 residues: MAGPAPGRRLVALALIVALAVGLPTAGAGQAPRPAERGPPVRLFTEEELARYGGEEEDQPIYMAVKGVVFDVTSGKEFYGRGAPYNALTGKDSTRGVAKMSLDPADLTHDTTGLTAEELESLDDVFTRVYKAKYPIVGYTARRILNEDGSPNLDFKPEDQPHFDIKDEF.

The signal sequence occupies residues 1 to 28; sequence MAGPAPGRRLVALALIVALAVGLPTAGA. In terms of domain architecture, Cytochrome b5 heme-binding spans 41 to 126; that stretch reads VRLFTEEELA…EELESLDDVF (86 aa). Residue K133 is modified to N6-acetyllysine. The segment at 148–169 is disordered; the sequence is DGSPNLDFKPEDQPHFDIKDEF. Residues 155 to 169 show a composition bias toward basic and acidic residues; it reads FKPEDQPHFDIKDEF.

It belongs to the cytochrome b5 family. MAPR subfamily. As to quaternary structure, interacts with PINK1 and PARK7.

It is found in the secreted. Its subcellular location is the extracellular space. The protein resides in the mitochondrion. It localises to the endoplasmic reticulum. In terms of biological role, acts as a neurotrophic factor in postnatal mature neurons enhancing neuronal survival. Promotes cell proliferation and neurogenesis in undifferentiated neural progenitor cells at the embryonic stage and inhibits differentiation of astrocytes. Its neurotrophic activity is exerted via MAPK1/ERK2, MAPK3/ERK1 and AKT1/AKT pathways. Neurotrophic activity is enhanced by binding to heme. Also acts as an anorexigenic neurotrophic factor that contributes to energy balance. The protein is Neudesin (NENF) of Bos taurus (Bovine).